Reading from the N-terminus, the 257-residue chain is Ribosome maturation factor RimP (257 aa).

The tract at residues 182–257 (LRRGGPPAAD…SRLKDRDSLH (76 aa)) is disordered. The segment covering 191-205 (DEADEAEEAEDEEVA) has biased composition (acidic residues). Positions 224 to 236 (KASPAAKPQKQAR) are enriched in low complexity.

Belongs to the RimP family.

It is found in the cytoplasm. In terms of biological role, required for maturation of 30S ribosomal subunits. In Methylobacterium radiotolerans (strain ATCC 27329 / DSM 1819 / JCM 2831 / NBRC 15690 / NCIMB 10815 / 0-1), this protein is Ribosome maturation factor RimP.